We begin with the raw amino-acid sequence, 497 residues long: Aspartyl/glutamyl-tRNA(Asn/Gln) amidotransferase subunit B (497 aa).

It belongs to the GatB/GatE family. GatB subfamily. In terms of assembly, heterotrimer of A, B and C subunits.

It catalyses the reaction L-glutamyl-tRNA(Gln) + L-glutamine + ATP + H2O = L-glutaminyl-tRNA(Gln) + L-glutamate + ADP + phosphate + H(+). It carries out the reaction L-aspartyl-tRNA(Asn) + L-glutamine + ATP + H2O = L-asparaginyl-tRNA(Asn) + L-glutamate + ADP + phosphate + 2 H(+). In terms of biological role, allows the formation of correctly charged Asn-tRNA(Asn) or Gln-tRNA(Gln) through the transamidation of misacylated Asp-tRNA(Asn) or Glu-tRNA(Gln) in organisms which lack either or both of asparaginyl-tRNA or glutaminyl-tRNA synthetases. The reaction takes place in the presence of glutamine and ATP through an activated phospho-Asp-tRNA(Asn) or phospho-Glu-tRNA(Gln). This chain is Aspartyl/glutamyl-tRNA(Asn/Gln) amidotransferase subunit B, found in Rhodopirellula baltica (strain DSM 10527 / NCIMB 13988 / SH1).